We begin with the raw amino-acid sequence, 290 residues long: Putative beta-lactamase HcpC (290 aa).

An N-terminal signal peptide occupies residues 1-25 (MLENVKKSLFRVLCLGALCLGGLMA). TPR repeat units lie at residues 29–62 (PKELVGLGAKSYKEQDFTQAKKYFEKACDLKENS), 64–98 (CFNLGVLYYQGHGVEKNLKKAASFYSKACDLNYSN), 100–133 (CHLLGNLYYSGQGVSQNTNKALQYYSKACDLKYA), 134–170 (EGCASLGGIYHDGKVVTRDFKKAVEYFTKACDLNDGD), 172–205 (CTILGSLYDAGRGTPKDLKKALASYDKACDLKDS), 206–242 (PGCFNAGNMYHHGEGAAKNFKEALARYSKACELENGG), and 244–278 (CFNLGAMQYNGEGATRNEKQAIENFKKGCKLGAKG). Cystine bridges form between Cys-56–Cys-64, Cys-92–Cys-100, Cys-128–Cys-136, Cys-164–Cys-172, Cys-200–Cys-208, Cys-236–Cys-244, and Cys-272–Cys-280.

This sequence belongs to the hcp beta-lactamase family.

Its subcellular location is the secreted. The catalysed reaction is a beta-lactam + H2O = a substituted beta-amino acid. Functionally, may hydrolyze 6-aminopenicillinic acid and 7-aminocephalosporanic acid (ACA) derivatives. The sequence is that of Putative beta-lactamase HcpC (hcpC) from Helicobacter pylori (strain J99 / ATCC 700824) (Campylobacter pylori J99).